A 646-amino-acid polypeptide reads, in one-letter code: Lipoteichoic acid synthase (646 aa).

The Cytoplasmic segment spans residues Met1–Lys7. A helical transmembrane segment spans residues Ile8–Ser28. Residues Tyr29 to Asn43 lie on the Extracellular side of the membrane. The helical transmembrane segment at Leu44–Phe64 threads the bilayer. The Cytoplasmic portion of the chain corresponds to Lys65–Lys68. Residues Ala69–Val89 traverse the membrane as a helical segment. Topologically, residues Tyr90–Ser119 are extracellular. Residues Phe120–Phe140 form a helical membrane-spanning segment. Residues Lys141 to Lys153 lie on the Cytoplasmic side of the membrane. Residues Phe154 to Glu174 traverse the membrane as a helical segment. At Thr175–Lys646 the chain is on the extracellular side. Mn(2+)-binding residues include Glu255 and Thr300. Residue Thr300 is part of the active site. His416 lines the substrate pocket. Mn(2+) contacts are provided by Asp475 and His476. Residues Asn623 to Thr638 show a composition bias toward basic and acidic residues. Residues Asn623–Lys646 form a disordered region.

It belongs to the LTA synthase family. Post-translationally, proteolytically cleaved.

The protein resides in the cell membrane. It is found in the secreted. It functions in the pathway cell wall biogenesis; lipoteichoic acid biosynthesis. Catalyzes the polymerization of lipoteichoic acid (LTA) polyglycerol phosphate, a reaction that presumably uses phosphatidylglycerol (PG) as substrate. Is required for staphylococcal growth and cell division process. In Staphylococcus aureus (strain USA300), this protein is Lipoteichoic acid synthase (ltaS).